A 218-amino-acid chain; its full sequence is Small ribosomal subunit protein uS3 (218 aa).

The 70-residue stretch at V38–K107 folds into the KH type-2 domain.

Belongs to the universal ribosomal protein uS3 family. Part of the 30S ribosomal subunit. Forms a tight complex with proteins S10 and S14.

Binds the lower part of the 30S subunit head. Binds mRNA in the 70S ribosome, positioning it for translation. This chain is Small ribosomal subunit protein uS3, found in Exiguobacterium sibiricum (strain DSM 17290 / CCUG 55495 / CIP 109462 / JCM 13490 / 255-15).